The following is a 277-amino-acid chain: Protein EURL homolog (277 aa).

Positions 173–201 (LGLWPGERPQNREQRDSRQRRHSGHSREE) are disordered. Residues 197–229 (HSREELMRKNVEELRQLNEQLLLQIQNVFEELS) are a coiled coil.

It belongs to the EURL family.

In terms of biological role, plays a role in cortical progenitor cell proliferation and differentiation. May promote dendritic spine development of post-migratory cortical projection neurons by modulating the beta-catenin signaling pathway. In Danio rerio (Zebrafish), this protein is Protein EURL homolog.